Here is a 1107-residue protein sequence, read N- to C-terminus: Unconventional myosin-Ib (1107 aa).

Residues 15 to 701 (IGVGDMVLLE…TLFQLEDLRK (687 aa)) enclose the Myosin motor domain. Serine 60 carries the post-translational modification Phosphoserine. 108 to 115 (GESGAGKT) serves as a coordination point for ATP. A Glycyl lysine isopeptide (Lys-Gly) (interchain with G-Cter in SUMO1); alternate cross-link involves residue lysine 287. A Glycyl lysine isopeptide (Lys-Gly) (interchain with G-Cter in SUMO2); alternate cross-link involves residue lysine 287. Residues 592–599 (YIRCIKPN) form an actin-binding region. IQ domains are found at residues 704–727 (LEDL…FLLM), 728–749 (KRSQ…RYQQ), 750–778 (IKSS…HQKR), 780–807 (KEAA…EEAR), and 808–837 (RKHA…ANAG). The TH1 domain occupies 923–1107 (KALYPSSVGQ…NNRLLEVAVP (185 aa)).

Belongs to the TRAFAC class myosin-kinesin ATPase superfamily. Myosin family. Prominent expression is seen in the brain, lung and liver. It is also expressed in the heart and testis. A high level expression is seen in virtually all neurons (but not glia) in the postnatal and adult mouse brain and in neuroblasts of the cerebellar external granular layer.

Functionally, motor protein that may participate in process critical to neuronal development and function such as cell migration, neurite outgrowth and vesicular transport. The chain is Unconventional myosin-Ib (Myo1b) from Mus musculus (Mouse).